The sequence spans 156 residues: Arginine repressor (156 aa).

It belongs to the ArgR family.

It localises to the cytoplasm. The protein operates within amino-acid biosynthesis; L-arginine biosynthesis [regulation]. Functionally, regulates arginine biosynthesis genes. This Salmonella agona (strain SL483) protein is Arginine repressor.